The chain runs to 214 residues: Osteoclast-stimulating factor 1 (214 aa).

The region spanning 12 to 71 (GQVKVFRALYTFEPRTPDELYFEEGDILYIADMSDTNWWKGTCKGKTGLIPSNYVAEQAE) is the SH3 domain. 3 ANK repeats span residues 72–101 (SIDN…GVNG), 105–135 (AGST…ELNQ), and 139–168 (LGDT…RTDL).

The protein resides in the cytoplasm. Its function is as follows. Induces bone resorption, acting probably through a signaling cascade which results in the secretion of factor(s) enhancing osteoclast formation and activity. This Xenopus laevis (African clawed frog) protein is Osteoclast-stimulating factor 1 (ostf1).